The following is a 1069-amino-acid chain: DNA annealing helicase and endonuclease ZRANB3 (1069 aa).

Positions 46 to 208 constitute a Helicase ATP-binding domain; it reads VFALRRDGRC…FMQIEALFPQ (163 aa). The segment at 46 to 481 is DNA annealing helicase activity; it reads VFALRRDGRC…GRKEKLQATE (436 aa). 59–66 contacts ATP; sequence DEMGLGKT. Positions 157–160 match the DEAH box motif; it reads DESH. Residues 325-485 enclose the Helicase C-terminal domain; sequence AVKDYIKMLL…KLQATEDDKE (161 aa). The short motif at 518–525 is the PIP-box element; the sequence is QHDIRSFF. The RanBP2-type zinc-finger motif lies at 617–646; it reads PEKGWQCGFCTFLNNPGLPYCEMCENPRSR. The disordered stretch occupies residues 648 to 720; that stretch reads AGRNHLQDNN…PEIGQLNNSG (73 aa). Composition is skewed to basic and acidic residues over residues 652–661 and 677–707; these read HLQDNNKNDE and ECER…EDRL. An HNH domain is found at 1001–1041; the sequence is PGEGHFWQVDHIRPVYEGGGQCSLDNLQTLCTVCHKERTAQ. Residues 1001-1069 are endonuclease activity; the sequence is PGEGHFWQVD…SDITRFLVKK (69 aa). Positions 1064 to 1068 match the APIM motif motif; it reads RFLVK.

Belongs to the SNF2/RAD54 helicase family. In terms of assembly, interacts (via PIP-box and RanBP2-type zinc finger) with PCNA (when PCNA is polyubiquitinated via 'Lys-63'-linked polyubiquitin).

It localises to the nucleus. It is found in the chromosome. Functionally, DNA annealing helicase and endonuclease required to maintain genome stability at stalled or collapsed replication forks by facilitating fork restart and limiting inappropriate recombination that could occur during template switching events. Recruited to the sites of stalled DNA replication by polyubiquitinated PCNA and acts as a structure-specific endonuclease that cleaves the replication fork D-loop intermediate, generating an accessible 3'-OH group in the template of the leading strand, which is amenable to extension by DNA polymerase. In addition to endonuclease activity, also catalyzes the fork regression via annealing helicase activity in order to prevent disintegration of the replication fork and the formation of double-strand breaks. The protein is DNA annealing helicase and endonuclease ZRANB3 (Zranb3) of Mus musculus (Mouse).